The sequence spans 117 residues: MSAGSSCSQTPSRAIPTRRVALGDGVQLPPGDYSTTPGGTLFSTTPGGTRIIYDRKFLMECRNSPVAKTPPKDLPTIPGVTSPTSDEPPMQASQSHLHSSPEDKRAGGEESQFEMDI.

Polar residues-rich tracts occupy residues 1–12 (MSAGSSCSQTPS) and 33–47 (YSTTPGGTLFSTTPG). Positions 1–47 (MSAGSSCSQTPSRAIPTRRVALGDGVQLPPGDYSTTPGGTLFSTTPG) are disordered. Residue serine 2 is modified to N-acetylserine. A phosphothreonine mark is found at threonine 36 and threonine 40. At serine 43 the chain carries Phosphoserine. The residue at position 45 (threonine 45) is a Phosphothreonine; by MTOR. At threonine 49 the chain carries Phosphothreonine. At tyrosine 53 the chain carries Phosphotyrosine. Residues 53 to 59 (YDRKFLM) carry the YXXXXLphi motif motif. Lysine 56 participates in a covalent cross-link: Glycyl lysine isopeptide (Lys-Gly) (interchain with G-Cter in ubiquitin). Serine 64 is subject to Phosphoserine; by DYRK2, MAPK1, MAPK3 and MTOR. Residues 64 to 117 (SPVAKTPPKDLPTIPGVTSPTSDEPPMQASQSHLHSSPEDKRAGGEESQFEMDI) form a disordered region. Threonine 69 bears the Phosphothreonine; by MTOR mark. Threonine 76 is modified (phosphothreonine). A compositionally biased stretch (polar residues) spans 79 to 98 (GVTSPTSDEPPMQASQSHLH). Phosphoserine occurs at positions 82, 95, and 99. Over residues 99–108 (SSPEDKRAGG) the composition is skewed to basic and acidic residues. Serine 100 is modified (phosphoserine; by DYRK2). Position 111 is a phosphoserine (serine 111). The short motif at 113 to 117 (FEMDI) is the TOS motif element.

This sequence belongs to the eIF4E-binding protein family. In terms of assembly, hypophosphorylated EIF4EBP1 competes with EIF4G1/EIF4G3 to interact with EIF4E; insulin stimulated MAP-kinase (MAPK1 and MAPK3) or mTORC1 phosphorylation of EIF4EBP1 causes dissociation of the complex allowing EIF4G1/EIF4G3 to bind and consequent initiation of translation. Interacts (via TOS motif) with RPTOR; promoting phosphorylation by mTORC1. Post-translationally, phosphorylated on serine and threonine residues in response to insulin, EGF and PDGF. Phosphorylation at Thr-36, Thr-45, Ser-64 and Thr-69, corresponding to the hyperphosphorylated form, is regulated by mTORC1 and abolishes binding to EIF4E. Ubiquitinated: when eIF4E levels are low, hypophosphorylated form is ubiquitinated by the BCR(KLHL25) complex, leading to its degradation and serving as a homeostatic mechanism to maintain translation and prevent eIF4E inhibition when eIF4E levels are low. Not ubiquitinated when hyperphosphorylated (at Thr-36, Thr-45, Ser-64 and Thr-69) or associated with eIF4E. In terms of tissue distribution, expressed in all tissues examined; highest levels in fat and skeletal tissue, lowest levels in kidney.

The protein resides in the cytoplasm. It is found in the nucleus. Its function is as follows. Repressor of translation initiation that regulates EIF4E activity by preventing its assembly into the eIF4F complex: hypophosphorylated form competes with EIF4G1/EIF4G3 and strongly binds to EIF4E, leading to repress translation. In contrast, hyperphosphorylated form dissociates from EIF4E, allowing interaction between EIF4G1/EIF4G3 and EIF4E, leading to initiation of translation. Mediates the regulation of protein translation by hormones, growth factors and other stimuli that signal through the MAP kinase and mTORC1 pathways. The chain is Eukaryotic translation initiation factor 4E-binding protein 1 (Eif4ebp1) from Rattus norvegicus (Rat).